Reading from the N-terminus, the 57-residue chain is UPF0391 membrane protein RPB_2510 (57 aa).

The next 2 membrane-spanning stretches (helical) occupy residues 6–26 (WALI…TGIS) and 35–55 (ILFY…FTIF).

This sequence belongs to the UPF0391 family.

The protein resides in the cell membrane. The protein is UPF0391 membrane protein RPB_2510 of Rhodopseudomonas palustris (strain HaA2).